Here is a 1445-residue protein sequence, read N- to C-terminus: Tensin-3 (1445 aa).

The 170-residue stretch at M1–S170 folds into the Phosphatase tensin-type domain. A C2 tensin-type domain is found at A175 to T301. At T323 the chain carries Phosphothreonine. Residues S332 and S361 each carry the phosphoserine modification. The interval R358–E421 is disordered. Residues T386–A400 are compositionally biased toward polar residues. S440 and S516 each carry phosphoserine. The tract at residues V538–R568 is disordered. Basic and acidic residues predominate over residues P548–K561. S571 carries the post-translational modification Phosphoserine. 2 disordered regions span residues D618–I695 and P717–G769. Position 632 is a phosphothreonine (T632). Phosphoserine occurs at positions 649, 660, 687, and 690. Residues L723–P733 are compositionally biased toward polar residues. Phosphoserine occurs at positions 735 and 776. Y780 is subject to Phosphotyrosine. Residues S811, S866, and S901 each carry the phosphoserine modification. 2 disordered regions span residues A859–D981 and G1076–G1127. Over residues P864–S873 the composition is skewed to pro residues. The span at A914–P935 shows a compositional bias: polar residues. Basic and acidic residues predominate over residues P1099–R1109. A compositionally biased stretch (low complexity) spans S1110–G1127. S1149 and S1154 each carry phosphoserine. An SH2 domain is found at W1172–E1282. 2 positions are modified to phosphoserine: S1293 and S1441. One can recognise a PTB domain in the interval A1310–K1444.

This sequence belongs to the PTEN phosphatase protein family. Interacts with EGFR; EGF promotes the interaction with EGFR. Interacts with PTK2/FAK1 and BCAR1. Tyrosine phosphorylation is critical for these interactions. Interacts with Rho GTPase-activating protein DLC1 and with the regulatory p85 subunit of the PI3K kinase complex; in resting cells, interacts (via C2 tensin-type domain) with DLC1 but, following growth factor stimulation, TNS3 is phosphorylated which leads to weakened interaction with DLC1 and enhanced interaction (via C2 tensin-type domain) with p85 while DLC1 interaction with PTEN increases. Interacts (when phosphorylated on the SH2 domain) with integrins ITGB1, ITGB3 and ITGB5 and with scaffolding protein PEAK1 (phosphorylated on 'Tyr-635'); mediates the association of PEAK1 with ITGB1, ITGB3 and ITGB5. Interacts (via N-terminus) with DOCK5 (via N-terminus); the interaction increases DOCK5 guanine nucleotide exchange activity towards Rac. Interacts with receptor tyrosine kinase MET. Phosphorylated on Ser/Thr and Tyr residues. Phosphorylated on Thr-323 in the C2-type tensin domain following EGF stimulation which changes its binding preference from DLC1 to the p85 regulatory subunit of the PI3K kinase complex. EGF induces tyrosine phosphorylation in a time- and dose-dependent manner. Phosphorylation of the SH2 domain enhances interaction with PEAK1. Expressed in umbilical vein endothelial cells, epithelial cells, and fibroblasts cells (at protein level). Highly expressed in thyroid, kidney and placenta. Low expression in heart, skeletal muscle, spleen, liver, and lung. Expressed at higher levels in tonsil-derived mesenchymal stem cells (MSCs) than in adipose tissue-derived MSCs or bone marrow-derived MSCs. Expressed in tumor endothelial cells. Expression seems to be down-regulated in thyroid tumor tissues and in anaplastic carcinomas.

The protein resides in the cell junction. It is found in the focal adhesion. The protein localises to the cell projection. Its subcellular location is the podosome. May act as a protein phosphatase and/or a lipid phosphatase. Involved in the dissociation of the integrin-tensin-actin complex. EGF activates TNS4 and down-regulates TNS3 which results in capping the tail of ITGB1. Increases DOCK5 guanine nucleotide exchange activity towards Rac and plays a role in osteoclast podosome organization. Enhances RHOA activation in the presence of DLC1. Required for growth factor-induced epithelial cell migration; growth factor stimulation induces TNS3 phosphorylation which changes its binding preference from DLC1 to the p85 regulatory subunit of the PI3K kinase complex, displacing PI3K inhibitor PTEN and resulting in translocation of the TNS3-p85 complex to the leading edge of migrating cells to promote RAC1 activation. Meanwhile, PTEN switches binding preference from p85 to DLC1 and the PTEN-DLC1 complex translocates to the posterior of migrating cells to activate RHOA. Acts as an adapter protein by bridging the association of scaffolding protein PEAK1 with integrins ITGB1, ITGB3 and ITGB5 which contributes to the promotion of cell migration. Controls tonsil-derived mesenchymal stem cell proliferation and differentiation by regulating the activity of integrin ITGB1. This chain is Tensin-3 (TNS3), found in Homo sapiens (Human).